The chain runs to 544 residues: Chaperonin GroEL 1 (544 aa).

ATP contacts are provided by residues 30 to 33 (TLGP), Lys51, 87 to 91 (DGTTT), Gly415, and Asp494.

The protein belongs to the chaperonin (HSP60) family. In terms of assembly, forms a cylinder of 14 subunits composed of two heptameric rings stacked back-to-back. Interacts with the co-chaperonin GroES.

It localises to the cytoplasm. The catalysed reaction is ATP + H2O + a folded polypeptide = ADP + phosphate + an unfolded polypeptide.. In terms of biological role, together with its co-chaperonin GroES, plays an essential role in assisting protein folding. The GroEL-GroES system forms a nano-cage that allows encapsulation of the non-native substrate proteins and provides a physical environment optimized to promote and accelerate protein folding. In Syntrophus aciditrophicus (strain SB), this protein is Chaperonin GroEL 1.